The following is a 281-amino-acid chain: 3'-5' exonuclease Snipper (281 aa).

The tract at residues 19–52 (DGARPDPNNDPEESFNEDEVTEANSVPAKSKKSR) is disordered. The segment covering 27–39 (NDPEESFNEDEVT) has biased composition (acidic residues). Positions 64 to 262 (YVIAVDFEAT…MCKMVRDGAL (199 aa)) constitute an Exonuclease domain. Mg(2+) is bound by residues D69 and E71. The active-site Proton acceptor is the E71. AMP-binding residues include E71 and A72. Mg(2+) is bound at residue D183. Catalysis depends on H240, which acts as the Proton acceptor. An AMP-binding site is contributed by H240. D245 is a binding site for Mg(2+).

The protein belongs to the ERI2 family. Mg(2+) serves as cofactor.

It is found in the cytoplasm. It localises to the nucleus. Its subcellular location is the nucleolus. A broad-specificity exonuclease, capable of degrading both structure-specific DNA and RNA targets without sequence specificity in vitro. Requires two to five unpaired nucleotides in the 3' region for efficient binding and nuclease activity. Binds with higher affinity to RNA and DNA stem-loop substrates compared to single-stranded substrate. Binds to the 3'-end of histone mRNAs and degrades them, suggesting that it might play a role in histone mRNA decay after replication. Can readily cleave the histone stem-loop RNA beyond the -12 (UUU) position in the loop to produce -14 and then -16 oligonucleotide fragments for both the stem-loop and the reverse stem-loop. Cleaves both the single-stranded 3' flank as well as the double-stranded stem portion of histone stem-loop RNA. Might affect histone mRNA 3' processing thereby regulating histone protein expression. Has an important role in development and tissue formation. Might have a role in 5.8S rRNA precursor processing. This chain is 3'-5' exonuclease Snipper, found in Drosophila melanogaster (Fruit fly).